We begin with the raw amino-acid sequence, 170 residues long: Lipoprotein signal peptidase (170 aa).

The next 3 helical transmembrane spans lie at 5–25, 62–82, and 89–111; these read IVGV…KAYA, SNLI…VLFV, and STIC…LRFG. Active-site residues include aspartate 115 and aspartate 133. The helical transmembrane segment at 126–146 threads the bilayer; that stretch reads WPAFNFADVCVTCGVICFLCL.

The protein belongs to the peptidase A8 family.

It localises to the cell inner membrane. The enzyme catalyses Release of signal peptides from bacterial membrane prolipoproteins. Hydrolyzes -Xaa-Yaa-Zaa-|-(S,diacylglyceryl)Cys-, in which Xaa is hydrophobic (preferably Leu), and Yaa (Ala or Ser) and Zaa (Gly or Ala) have small, neutral side chains.. It participates in protein modification; lipoprotein biosynthesis (signal peptide cleavage). This protein specifically catalyzes the removal of signal peptides from prolipoproteins. This Anaplasma marginale (strain Florida) protein is Lipoprotein signal peptidase.